The following is a 313-amino-acid chain: ADP-L-glycero-D-manno-heptose-6-epimerase (313 aa).

NADP(+) contacts are provided by residues 10–11, 31–32, lysine 38, lysine 53, 75–79, and asparagine 92; these read MI, DN, and EGACS. Tyrosine 139 (proton acceptor) is an active-site residue. NADP(+) is bound at residue lysine 143. Asparagine 174 contacts substrate. NADP(+) contacts are provided by valine 175 and lysine 183. Lysine 183 (proton acceptor) is an active-site residue. Substrate is bound by residues serine 185, histidine 192, 206–209, arginine 214, and tyrosine 277; that span reads FEGS.

The protein belongs to the NAD(P)-dependent epimerase/dehydratase family. HldD subfamily. Homopentamer. It depends on NADP(+) as a cofactor.

It catalyses the reaction ADP-D-glycero-beta-D-manno-heptose = ADP-L-glycero-beta-D-manno-heptose. The protein operates within nucleotide-sugar biosynthesis; ADP-L-glycero-beta-D-manno-heptose biosynthesis; ADP-L-glycero-beta-D-manno-heptose from D-glycero-beta-D-manno-heptose 7-phosphate: step 4/4. Functionally, catalyzes the interconversion between ADP-D-glycero-beta-D-manno-heptose and ADP-L-glycero-beta-D-manno-heptose via an epimerization at carbon 6 of the heptose. The protein is ADP-L-glycero-D-manno-heptose-6-epimerase of Aliivibrio fischeri (strain ATCC 700601 / ES114) (Vibrio fischeri).